Reading from the N-terminus, the 339-residue chain is Tryptophan--tRNA ligase (339 aa).

ATP-binding positions include 11-13 (QPT) and 19-20 (GN). A 'HIGH' region motif is present at residues 12 to 20 (PTGAIHIGN). D135 lines the L-tryptophan pocket. Residues 147-149 (GED), I191, and 200-204 (KMSKS) each bind ATP. The 'KMSKS' region motif lies at 200-204 (KMSKS).

This sequence belongs to the class-I aminoacyl-tRNA synthetase family. As to quaternary structure, homodimer.

It localises to the cytoplasm. It carries out the reaction tRNA(Trp) + L-tryptophan + ATP = L-tryptophyl-tRNA(Trp) + AMP + diphosphate + H(+). Functionally, catalyzes the attachment of tryptophan to tRNA(Trp). The sequence is that of Tryptophan--tRNA ligase from Prochlorococcus marinus (strain SARG / CCMP1375 / SS120).